The chain runs to 1438 residues: Membrane-anchored lipid-binding protein YSP2 (1438 aa).

Over residues 1-17 (MRDEATRKKRSFSDGHF) the composition is skewed to basic and acidic residues. Disordered stretches follow at residues 1-97 (MRDE…SHTP), 174-194 (KVKHTDTKNTFNSSSSENERP), 200-219 (QKDDSQSSSHPAIDSMSAPN), 285-308 (QQQHPLSQQQGPLPVSENANQNPN), 338-418 (TSGP…KVKF), 455-485 (DENNTNNNPNASSTNLSHISKSNVNNNLGPK), and 505-543 (SQSNLSSHRARSKTLPANKALENAVGDEGNSKRNSRYSS). Residues 1 to 1277 (MRDEATRKKR…SAFSMLQQVN (1277 aa)) are Cytoplasmic-facing. S13 bears the Phosphoserine mark. A compositionally biased stretch (basic residues) spans 18–29 (FKKLKLMSRKKQ). A compositionally biased stretch (basic and acidic residues) spans 30–44 (PVMERSKTTRTRKES). The span at 45 to 58 (TNSAAKSSLSLRRA) shows a compositional bias: low complexity. Over residues 74 to 97 (IGSTNEGVAGNSGSNSPAQYSHTP) the composition is skewed to polar residues. Low complexity-rich tracts occupy residues 286–298 (QQHPLSQQQGPLP) and 374–398 (PTNTSTTPLSGSLTPNNRNVNANSN). S411 carries the post-translational modification Phosphoserine. A compositionally biased stretch (low complexity) spans 455 to 470 (DENNTNNNPNASSTNL). The span at 471-485 (SHISKSNVNNNLGPK) shows a compositional bias: polar residues. S596 is subject to Phosphoserine. The 69-residue stretch at 648–716 (EFHTLFKDCD…KEIVQIEKKT (69 aa)) folds into the GRAM domain. The interval 777 to 843 (SSSAFFDDSD…LGPNKHSPTT (67 aa)) is disordered. Positions 783–800 (DDSDDNDDDGDLDDDDPD) are enriched in acidic residues. The span at 818 to 832 (NESNDLGKNQKSTNY) shows a compositional bias: polar residues. One can recognise a VASt 1 domain in the interval 851–1018 (NDHLVIEANI…EIKKILSDED (168 aa)). The residue at position 1032 (S1032) is a Phosphoserine. One can recognise a VASt 2 domain in the interval 1059 to 1225 (DDTVIDEKIN…DLKKIISNAS (167 aa)). The interval 1225–1257 (SSTKKKSRRRGKTVNKRKSSPSTIKNEKNEENF) is disordered. Positions 1227 to 1243 (TKKKSRRRGKTVNKRKS) are enriched in basic residues. A helical membrane pass occupies residues 1278–1298 (ITSVQGIMTIISFFICLIFFF). Residues 1299 to 1438 (RLLFHSKNTS…DNTSATNQLL (140 aa)) are Lumenal-facing. N1306, N1373, and N1430 each carry an N-linked (GlcNAc...) asparagine glycan.

The protein belongs to the YSP2 family.

The protein localises to the mitochondrion membrane. Its subcellular location is the endoplasmic reticulum membrane. Its function is as follows. Involved in induction of programmed cell death in response to reactive oxygen species (ROS). May be involved in sterol transfer between intracellular membranes. The polypeptide is Membrane-anchored lipid-binding protein YSP2 (Saccharomyces cerevisiae (strain ATCC 204508 / S288c) (Baker's yeast)).